We begin with the raw amino-acid sequence, 918 residues long: DNA mismatch repair protein MutS (918 aa).

An ATP-binding site is contributed by 662-669 (GPNMAGKS).

This sequence belongs to the DNA mismatch repair MutS family.

Its function is as follows. This protein is involved in the repair of mismatches in DNA. It is possible that it carries out the mismatch recognition step. This protein has a weak ATPase activity. The protein is DNA mismatch repair protein MutS of Sorangium cellulosum (strain So ce56) (Polyangium cellulosum (strain So ce56)).